The sequence spans 117 residues: uncharacterized protein (117 aa).

This is an uncharacterized protein from Homo sapiens (Human).